A 220-amino-acid polypeptide reads, in one-letter code: Sugar transporter SWEET1 (220 aa).

7 helical membrane-spanning segments follow: residues 9-29, 44-64, 70-90, 106-126, 138-158, 167-187, and 191-211; these read LMTF…IMPL, VAGL…SYAL, TMLF…FNYW, VMIA…NTVD, LSSV…AIVI, IINV…FGLL, and IYIY…LTLI. A MtN3/slv 1 domain is found at 12-92; the sequence is FIQFCATFIT…IYYVFNYWKN (81 aa). In terms of domain architecture, MtN3/slv 2 spans 134-217; the sequence is RLGFLSSVVC…LTLIKLYPPQ (84 aa).

The protein belongs to the SWEET sugar transporter family.

Its subcellular location is the golgi apparatus membrane. The protein localises to the cell membrane. Its function is as follows. Mediates both low-affinity uptake and efflux of sugar across the membrane. In Dictyostelium discoideum (Social amoeba), this protein is Sugar transporter SWEET1 (slc50a1).